The primary structure comprises 72 residues: Translation initiation factor IF-1 (72 aa).

The S1-like domain maps to 1-72 (MAKQDVIELE…TRGRITYRYK (72 aa)).

This sequence belongs to the IF-1 family. As to quaternary structure, component of the 30S ribosomal translation pre-initiation complex which assembles on the 30S ribosome in the order IF-2 and IF-3, IF-1 and N-formylmethionyl-tRNA(fMet); mRNA recruitment can occur at any time during PIC assembly.

It is found in the cytoplasm. Its function is as follows. One of the essential components for the initiation of protein synthesis. Stabilizes the binding of IF-2 and IF-3 on the 30S subunit to which N-formylmethionyl-tRNA(fMet) subsequently binds. Helps modulate mRNA selection, yielding the 30S pre-initiation complex (PIC). Upon addition of the 50S ribosomal subunit IF-1, IF-2 and IF-3 are released leaving the mature 70S translation initiation complex. This chain is Translation initiation factor IF-1, found in Staphylococcus aureus (strain USA300 / TCH1516).